The sequence spans 166 residues: Transcription factor HES-5 (166 aa).

The region spanning 16–72 (KNRLRKPVVEKMRRDRINSSIEQLKLLLEQEFARHQPNSKLEKADILEMAVSYLKHS) is the bHLH domain. An Orange domain is found at 88-119 (YSEGYSWCLQEAVQFLTLHAASDTQMKLLYHF). The tract at residues 125 to 144 (APAAPAKEPKAPGAAPPPAL) is disordered. Positions 163–166 (WRPW) match the WRPW motif motif.

In terms of assembly, transcription repression requires formation of a complex with a corepressor protein of the Groucho/TLE family. Expressed in fetal heart and brain tumors.

It localises to the nucleus. Functionally, transcriptional repressor of genes that require a bHLH protein for their transcription. Plays an important role as neurogenesis negative regulator. In Homo sapiens (Human), this protein is Transcription factor HES-5 (HES5).